We begin with the raw amino-acid sequence, 132 residues long: Glycine cleavage system H protein (132 aa).

Residues 24–106 (IATIGLSAFA…YGDGWLIKVR (83 aa)) form the Lipoyl-binding domain. K65 bears the N6-lipoyllysine mark.

The protein belongs to the GcvH family. The glycine cleavage system is composed of four proteins: P, T, L and H. The cofactor is (R)-lipoate.

Functionally, the glycine cleavage system catalyzes the degradation of glycine. The H protein shuttles the methylamine group of glycine from the P protein to the T protein. The sequence is that of Glycine cleavage system H protein from Rippkaea orientalis (strain PCC 8801 / RF-1) (Cyanothece sp. (strain PCC 8801)).